The following is a 604-amino-acid chain: Elongation factor 4 (604 aa).

Residues 7–189 form the tr-type G domain; sequence KRIRNFCIIA…SVVDRVPPPA (183 aa). Residues 19–24 and 136–139 each bind GTP; these read DHGKST and NKID.

Belongs to the TRAFAC class translation factor GTPase superfamily. Classic translation factor GTPase family. LepA subfamily.

The protein resides in the cell inner membrane. The enzyme catalyses GTP + H2O = GDP + phosphate + H(+). Its function is as follows. Required for accurate and efficient protein synthesis under certain stress conditions. May act as a fidelity factor of the translation reaction, by catalyzing a one-codon backward translocation of tRNAs on improperly translocated ribosomes. Back-translocation proceeds from a post-translocation (POST) complex to a pre-translocation (PRE) complex, thus giving elongation factor G a second chance to translocate the tRNAs correctly. Binds to ribosomes in a GTP-dependent manner. In Synechococcus sp. (strain CC9311), this protein is Elongation factor 4.